A 288-amino-acid polypeptide reads, in one-letter code: Quinate/shikimate dehydrogenase (288 aa).

Positions 71 and 107 each coordinate substrate. Residues 132–135 (AGGA), 155–158 (NRRD), Lys205, 232–235 (CVYN), and Gly255 each bind NAD(+).

It belongs to the shikimate dehydrogenase family. In terms of assembly, homodimer.

It catalyses the reaction L-quinate + NAD(+) = 3-dehydroquinate + NADH + H(+). The enzyme catalyses L-quinate + NADP(+) = 3-dehydroquinate + NADPH + H(+). The catalysed reaction is shikimate + NADP(+) = 3-dehydroshikimate + NADPH + H(+). It carries out the reaction shikimate + NAD(+) = 3-dehydroshikimate + NADH + H(+). Its pathway is metabolic intermediate biosynthesis; chorismate biosynthesis; chorismate from D-erythrose 4-phosphate and phosphoenolpyruvate: step 4/7. The actual biological function of YdiB remains unclear, nor is it known whether 3-dehydroshikimate or quinate represents the natural substrate. Catalyzes the reversible NAD-dependent reduction of both 3-dehydroshikimate (DHSA) and 3-dehydroquinate to yield shikimate (SA) and quinate, respectively. It can use both NAD or NADP for catalysis, however it has higher catalytic efficiency with NAD. This Escherichia coli O7:K1 (strain IAI39 / ExPEC) protein is Quinate/shikimate dehydrogenase.